A 106-amino-acid polypeptide reads, in one-letter code: uncharacterized protein (106 aa).

Transmembrane regions (helical) follow at residues Leu-46–Phe-68 and Ala-73–Ala-92.

It localises to the cell membrane. This is an uncharacterized protein from Bacillus subtilis (strain 168).